We begin with the raw amino-acid sequence, 258 residues long: uncharacterized protein (258 aa).

A run of 4 helical transmembrane segments spans residues 33-53 (LFVIFQVIISIVLLSLSVTTN), 59-79 (FDSWYYFASHLILSLFGIFVF), 88-108 (LLYLYVILLSGLLITASFSFF), and 140-160 (IIALIVVEGVALHPNLSWLIQ). The segment at 237–258 (NNKINSELQPPSILNKNSKPIE) is disordered. A compositionally biased stretch (polar residues) spans 242-258 (SELQPPSILNKNSKPIE).

Its subcellular location is the membrane. This is an uncharacterized protein from Dictyostelium discoideum (Social amoeba).